We begin with the raw amino-acid sequence, 354 residues long: Ornithine carbamoyltransferase, catabolic (354 aa).

Carbamoyl phosphate contacts are provided by residues 67-70 (STRT), Gln94, Arg118, and 145-148 (HPTQ). L-ornithine is bound by residues Asn177, Asp241, and 245-246 (SM). Residues 284–285 (CL) and Arg329 each bind carbamoyl phosphate.

The protein belongs to the aspartate/ornithine carbamoyltransferase superfamily. OTCase family.

Its subcellular location is the cytoplasm. It catalyses the reaction carbamoyl phosphate + L-ornithine = L-citrulline + phosphate + H(+). It functions in the pathway amino-acid degradation; L-arginine degradation via ADI pathway; carbamoyl phosphate from L-arginine: step 2/2. Functionally, reversibly catalyzes the transfer of the carbamoyl group from carbamoyl phosphate (CP) to the N(epsilon) atom of ornithine (ORN) to produce L-citrulline. The polypeptide is Ornithine carbamoyltransferase, catabolic (arcB) (Lactococcus lactis subsp. cremoris (Streptococcus cremoris)).